The chain runs to 86 residues: Toxin Tpa5 (86 aa).

The signal sequence occupies residues M1–A20. The LCN-type CS-alpha/beta domain occupies R22–M85. 4 disulfides stabilise this stretch: C33–C84, C37–C58, C43–C64, and C47–C66.

This sequence belongs to the long (4 C-C) scorpion toxin superfamily. Sodium channel inhibitor family. Beta subfamily. As to expression, expressed by the venom gland.

It is found in the secreted. In terms of biological role, beta toxins bind voltage-independently at site-4 of sodium channels (Nav) and shift the voltage of activation toward more negative potentials thereby affecting sodium channel activation and promoting spontaneous and repetitive firing. This Tityus pachyurus (Colombian scorpion) protein is Toxin Tpa5.